Consider the following 241-residue polypeptide: Pre-rRNA-processing protein pno1 (241 aa).

A disordered region spans residues 48–71; it reads APAKTSAEKKRGAKPQMRRVPIPP. Thr-52 is subject to Phosphothreonine. Residues 162 to 214 enclose the KH domain; it reads GDHLSRAIGRIAGQGGKTKFAIENASRTRIVLADSKIHILGGFTNIRIAKDAV.

The protein belongs to the PNO1 family. Component of the small ribosomal subunit, ribosomal RNA processing complex (SSU RRP complex).

It localises to the cytoplasm. It is found in the nucleus. The protein localises to the nucleolus. Required for small ribosomal subunit (SSU) synthesis. Has a role in the processing of early nucleolar and late cytoplasmic pre-RNA species. This Schizosaccharomyces pombe (strain 972 / ATCC 24843) (Fission yeast) protein is Pre-rRNA-processing protein pno1 (rbp28).